A 621-amino-acid chain; its full sequence is Nitrate reductase [NADH] 1 (621 aa).

The 76-residue stretch at 249 to 324 (GKEFTMSEVR…LDTYRIGELI (76 aa)) folds into the Cytochrome b5 heme-binding domain. The heme site is built by H284 and H307. Residues 361–473 (REKIHCRLVG…KGPLGHVEYT (113 aa)) enclose the FAD-binding FR-type domain. Residues 413–416 (RAYT), 430–432 (LVK), F435, 447–449 (LMT), S497, and T500 each bind FAD.

Belongs to the nitrate reductase family. Homodimer. It depends on FAD as a cofactor. The cofactor is heme. Mo-molybdopterin serves as cofactor.

The catalysed reaction is nitrite + NAD(+) + H2O = nitrate + NADH + H(+). Its function is as follows. Nitrate reductase is a key enzyme involved in the first step of nitrate assimilation in plants, fungi and bacteria. The protein is Nitrate reductase [NADH] 1 of Zea mays (Maize).